The chain runs to 354 residues: MSGKPKRLMVMAGGTGGHVFPGLAVAHHLMAQGWQVRWLGTADRMEADLVPKHGIEIDFIRISGLRGKGLKAQLSAPLRIWHAVRQAKAIMRNYQPDVVLGMGGYVSGPGGLAAWLCGIPVVLHEQNGIAGLTNRWLARIAKTVLQAFPGAFPNAEVVGNPVRTDVLALPLPAERLIGREGPIRVLVIGGSQGARVLNQTVPEVAARLGDKITLWHQVGKGALENVLRDYERVGQTQHKVAEFIDDMAAAYAWADVVVCRSGALTVSEIAAAGLPAIFVPFQHKDRQQYWNARPLEEAGAAKIIEQPQFNADVVAELLAGWDRPTLLAMAEKARAVAIPDATERVAAELVRVAK.

Residues T15–G17, N127, R163, S191, I244, A263–E268, and Q288 contribute to the UDP-N-acetyl-alpha-D-glucosamine site.

The protein belongs to the glycosyltransferase 28 family. MurG subfamily.

It localises to the cell inner membrane. The catalysed reaction is di-trans,octa-cis-undecaprenyl diphospho-N-acetyl-alpha-D-muramoyl-L-alanyl-D-glutamyl-meso-2,6-diaminopimeloyl-D-alanyl-D-alanine + UDP-N-acetyl-alpha-D-glucosamine = di-trans,octa-cis-undecaprenyl diphospho-[N-acetyl-alpha-D-glucosaminyl-(1-&gt;4)]-N-acetyl-alpha-D-muramoyl-L-alanyl-D-glutamyl-meso-2,6-diaminopimeloyl-D-alanyl-D-alanine + UDP + H(+). Its pathway is cell wall biogenesis; peptidoglycan biosynthesis. In terms of biological role, cell wall formation. Catalyzes the transfer of a GlcNAc subunit on undecaprenyl-pyrophosphoryl-MurNAc-pentapeptide (lipid intermediate I) to form undecaprenyl-pyrophosphoryl-MurNAc-(pentapeptide)GlcNAc (lipid intermediate II). The protein is UDP-N-acetylglucosamine--N-acetylmuramyl-(pentapeptide) pyrophosphoryl-undecaprenol N-acetylglucosamine transferase of Serratia proteamaculans (strain 568).